The sequence spans 510 residues: uncharacterized protein (510 aa).

Transmembrane regions (helical) follow at residues 17–37 (LKLGIISLGLGGLYSIILVVL), 56–76 (LIIHVNLSILIWLLSITASVW), 111–131 (VLYIYPKLAFFATLLIAISPL), 148–168 (IVFILGLSLFGVTLLLYAINI), 180–200 (LVNVTVFSTIIMFILSFVCFG), 223–243 (LLFWSGGHLLQFIYTQILIFI), 261–281 (FYLFILYLNFVFSILILFGHI), 300–320 (YLGGIAPILCLVGMVVELVLM), 355–375 (IIKTILLCSITLFLLGGLIAI), 382–402 (LVIPAHYHGSIVGISIACMGY), 434–454 (AIYLLTFGQILHILGLAFSGI), and 472–492 (LLMGMMGIGGLIAIVGGLMFV).

It to A.aeolicus AQ_155.

It localises to the cell membrane. This is an uncharacterized protein from Rickettsia prowazekii (strain Madrid E).